A 398-amino-acid chain; its full sequence is GPI mannosyltransferase 1 (398 aa).

Helical transmembrane passes span 4-24 (LKYLITFSILLRFGFFFFGLY), 79-99 (WYHFGKLLFMVSDVITGLIIL), 114-136 (MILSSIWLLNPMVITISTRGSAE), 156-176 (VILSAIWLGLSIHFKIYPIIY), 209-229 (IIITLTTLAVVNYLMFLKYGW), 271-291 (IEKIAFVPQLLLSAVIIPLIF), 305-325 (FVFVAFNKVITSQYFIWFLIF), 341-361 (ITGISCLLLWIISQATWLYFA), and 375-395 (GLMYSSVFFFLSNCWCTMKFI).

This sequence belongs to the PIGM family.

It is found in the endoplasmic reticulum membrane. Its pathway is glycolipid biosynthesis; glycosylphosphatidylinositol-anchor biosynthesis. Its function is as follows. Mannosyltransferase involved in glycosylphosphatidylinositol-anchor biosynthesis. Transfers the first alpha-1,4-mannose to GlcN-acyl-PI during GPI precursor assembly. Required for cell wall integrity. The polypeptide is GPI mannosyltransferase 1 (GPI14) (Candida albicans (strain SC5314 / ATCC MYA-2876) (Yeast)).